We begin with the raw amino-acid sequence, 291 residues long: Pyridoxal 5'-phosphate synthase subunit PdxS (291 aa).

A D-ribose 5-phosphate-binding site is contributed by D23. Catalysis depends on K80, which acts as the Schiff-base intermediate with D-ribose 5-phosphate. G152 contributes to the D-ribose 5-phosphate binding site. R164 serves as a coordination point for D-glyceraldehyde 3-phosphate. D-ribose 5-phosphate-binding positions include G213 and 234 to 235 (GS).

It belongs to the PdxS/SNZ family. In terms of assembly, in the presence of PdxT, forms a dodecamer of heterodimers.

It carries out the reaction aldehydo-D-ribose 5-phosphate + D-glyceraldehyde 3-phosphate + L-glutamine = pyridoxal 5'-phosphate + L-glutamate + phosphate + 3 H2O + H(+). It participates in cofactor biosynthesis; pyridoxal 5'-phosphate biosynthesis. Catalyzes the formation of pyridoxal 5'-phosphate from ribose 5-phosphate (RBP), glyceraldehyde 3-phosphate (G3P) and ammonia. The ammonia is provided by the PdxT subunit. Can also use ribulose 5-phosphate and dihydroxyacetone phosphate as substrates, resulting from enzyme-catalyzed isomerization of RBP and G3P, respectively. This chain is Pyridoxal 5'-phosphate synthase subunit PdxS, found in Haemophilus influenzae (strain ATCC 51907 / DSM 11121 / KW20 / Rd).